The primary structure comprises 92 residues: Large ribosomal subunit protein bL28 (92 aa).

The segment at 1 to 34 is disordered; that stretch reads MGRECEITGKKTMFGNNVPRKGLSRKKGGGGQHI.

This sequence belongs to the bacterial ribosomal protein bL28 family.

The sequence is that of Large ribosomal subunit protein bL28 from Borrelia turicatae (strain 91E135).